A 486-amino-acid polypeptide reads, in one-letter code: MPPTSGTSRSVALVTLGCARNDVDSEELAGRLADAGWTLVDDADGADVAVVNTCGFVEQAKKDSIDTVLAAADLKEAGRTKAVVAVGCMAERYGKDLAESLPEADAILGFDSYGDLSSHLEAILHGEKPQSHVPRDRRTLLPLAPAERQAARPVIAEPDLPEGLAPASGPRVVRRRLGSGPWAPVKIAAGCDRRCTFCAIPAFRGSFVSRPAEEVLAETRWLAEQGVKEVFLVSENTTSYGKDLGDLRALEALLPHVAAVEGIERVRVSYLQPAEVRPGLLDALTSTPGVVPYFDLSFQHSSPAVLRRMRRFGGTEPFLALLEQVRERHPQAGIRSNVIVGFPGETEADVDELCSFLERARLDVVGVFGYSDEDGTEAETLDGKLPDEVVAARVDRVTRLVEELVTQRAEERLGEVVEVLVESVVDEDGDPHVVGRAAHQGPDVDGETELDLPAGFVVHVGDLVTARVTGVAGADLLAEPLVRATV.

The MTTase N-terminal domain occupies 9-125; it reads RSVALVTLGC…LSSHLEAILH (117 aa). Residues Cys18, Cys54, Cys88, Cys191, Cys195, and Cys198 each coordinate [4Fe-4S] cluster. In terms of domain architecture, Radical SAM core spans 177–408; that stretch reads LGSGPWAPVK…RLVEELVTQR (232 aa). Residues 410 to 482 form the TRAM domain; it reads EERLGEVVEV…GADLLAEPLV (73 aa).

It belongs to the methylthiotransferase family. RimO subfamily. [4Fe-4S] cluster is required as a cofactor.

The protein localises to the cytoplasm. It carries out the reaction L-aspartate(89)-[ribosomal protein uS12]-hydrogen + (sulfur carrier)-SH + AH2 + 2 S-adenosyl-L-methionine = 3-methylsulfanyl-L-aspartate(89)-[ribosomal protein uS12]-hydrogen + (sulfur carrier)-H + 5'-deoxyadenosine + L-methionine + A + S-adenosyl-L-homocysteine + 2 H(+). Functionally, catalyzes the methylthiolation of an aspartic acid residue of ribosomal protein uS12. This Kineococcus radiotolerans (strain ATCC BAA-149 / DSM 14245 / SRS30216) protein is Ribosomal protein uS12 methylthiotransferase RimO.